We begin with the raw amino-acid sequence, 294 residues long: Acetylglutamate kinase (294 aa).

Residues 69-70, arginine 91, and asparagine 190 each bind substrate; that span reads GG.

It belongs to the acetylglutamate kinase family. ArgB subfamily.

It localises to the cytoplasm. The enzyme catalyses N-acetyl-L-glutamate + ATP = N-acetyl-L-glutamyl 5-phosphate + ADP. The protein operates within amino-acid biosynthesis; L-arginine biosynthesis; N(2)-acetyl-L-ornithine from L-glutamate: step 2/4. Functionally, catalyzes the ATP-dependent phosphorylation of N-acetyl-L-glutamate. The polypeptide is Acetylglutamate kinase (Mycobacterium tuberculosis (strain CDC 1551 / Oshkosh)).